The chain runs to 383 residues: Succinate--CoA ligase [ADP-forming] subunit beta (383 aa).

The ATP-grasp domain occupies 9–236 (KELLGRFGLR…VEAADPQEHR (228 aa)). Residues K45, 52–54 (GRG), E91, A94, and E99 contribute to the ATP site. Mg(2+) contacts are provided by N191 and D205. Substrate is bound by residues N256 and 313–315 (GIT).

It belongs to the succinate/malate CoA ligase beta subunit family. In terms of assembly, heterotetramer of two alpha and two beta subunits. Mg(2+) serves as cofactor.

The enzyme catalyses succinate + ATP + CoA = succinyl-CoA + ADP + phosphate. It catalyses the reaction GTP + succinate + CoA = succinyl-CoA + GDP + phosphate. It functions in the pathway carbohydrate metabolism; tricarboxylic acid cycle; succinate from succinyl-CoA (ligase route): step 1/1. In terms of biological role, succinyl-CoA synthetase functions in the citric acid cycle (TCA), coupling the hydrolysis of succinyl-CoA to the synthesis of either ATP or GTP and thus represents the only step of substrate-level phosphorylation in the TCA. The beta subunit provides nucleotide specificity of the enzyme and binds the substrate succinate, while the binding sites for coenzyme A and phosphate are found in the alpha subunit. The protein is Succinate--CoA ligase [ADP-forming] subunit beta of Rubrobacter xylanophilus (strain DSM 9941 / JCM 11954 / NBRC 16129 / PRD-1).